The following is a 66-amino-acid chain: Small ribosomal subunit protein eS30 (66 aa).

Residues 1–35 (MGKVHGGLNRAGKVRNATPKKDKEEKRKPKVGRAK) form a disordered region.

It belongs to the eukaryotic ribosomal protein eS30 family.

This is Small ribosomal subunit protein eS30 (rps30-1) from Dictyostelium discoideum (Social amoeba).